Consider the following 358-residue polypeptide: tRNA-specific 2-thiouridylase MnmA (358 aa).

ATP-binding positions include leucine 22–serine 29 and phenylalanine 48. The Nucleophile role is filled by cysteine 105. A disulfide bridge connects residues cysteine 105 and cysteine 201. Glycine 129 contacts ATP. The tract at residues lysine 151–glutamine 153 is interaction with tRNA. The Cysteine persulfide intermediate role is filled by cysteine 201. Positions arginine 306–tyrosine 307 are interaction with tRNA.

The protein belongs to the MnmA/TRMU family.

Its subcellular location is the cytoplasm. It carries out the reaction S-sulfanyl-L-cysteinyl-[protein] + uridine(34) in tRNA + AH2 + ATP = 2-thiouridine(34) in tRNA + L-cysteinyl-[protein] + A + AMP + diphosphate + H(+). Its function is as follows. Catalyzes the 2-thiolation of uridine at the wobble position (U34) of tRNA, leading to the formation of s(2)U34. This chain is tRNA-specific 2-thiouridylase MnmA, found in Desulfosudis oleivorans (strain DSM 6200 / JCM 39069 / Hxd3) (Desulfococcus oleovorans).